Here is a 213-residue protein sequence, read N- to C-terminus: Uridine kinase (213 aa).

ATP is bound at residue 15–22; that stretch reads GASASGKS.

It belongs to the uridine kinase family.

It localises to the cytoplasm. The catalysed reaction is uridine + ATP = UMP + ADP + H(+). It carries out the reaction cytidine + ATP = CMP + ADP + H(+). The protein operates within pyrimidine metabolism; CTP biosynthesis via salvage pathway; CTP from cytidine: step 1/3. Its pathway is pyrimidine metabolism; UMP biosynthesis via salvage pathway; UMP from uridine: step 1/1. This Sodalis glossinidius (strain morsitans) protein is Uridine kinase.